A 435-amino-acid polypeptide reads, in one-letter code: GTPase Obg (435 aa).

The region spanning 1–158 (MFIDRAKIYV…RWLYLELKLL (158 aa)) is the Obg domain. One can recognise an OBG-type G domain in the interval 159-328 (ADVGLVGLPN…LLELMEKYVR (170 aa)). Residues 165 to 172 (GLPNAGKS), 190 to 194 (FTTKT), 211 to 214 (DIPG), 280 to 283 (NKID), and 309 to 311 (SAK) each bind GTP. Residues Ser172 and Thr192 each coordinate Mg(2+). Residues 343–426 (IQETKEGRVE…IGDYIFKYNA (84 aa)) enclose the OCT domain.

Belongs to the TRAFAC class OBG-HflX-like GTPase superfamily. OBG GTPase family. Monomer. Mg(2+) is required as a cofactor.

It localises to the cytoplasm. Functionally, an essential GTPase which binds GTP, GDP and possibly (p)ppGpp with moderate affinity, with high nucleotide exchange rates and a fairly low GTP hydrolysis rate. Plays a role in control of the cell cycle, stress response, ribosome biogenesis and in those bacteria that undergo differentiation, in morphogenesis control. The chain is GTPase Obg from Dictyoglomus thermophilum (strain ATCC 35947 / DSM 3960 / H-6-12).